Reading from the N-terminus, the 296-residue chain is Acetylglutamate kinase (296 aa).

Residues 68 to 69 (GG), Arg-90, and Asn-195 contribute to the substrate site.

It belongs to the acetylglutamate kinase family. ArgB subfamily.

It is found in the cytoplasm. The enzyme catalyses N-acetyl-L-glutamate + ATP = N-acetyl-L-glutamyl 5-phosphate + ADP. It functions in the pathway amino-acid biosynthesis; L-arginine biosynthesis; N(2)-acetyl-L-ornithine from L-glutamate: step 2/4. Catalyzes the ATP-dependent phosphorylation of N-acetyl-L-glutamate. The chain is Acetylglutamate kinase from Desulfotalea psychrophila (strain LSv54 / DSM 12343).